Consider the following 212-residue polypeptide: Uracil phosphoribosyltransferase (212 aa).

5-phospho-alpha-D-ribose 1-diphosphate contacts are provided by residues Arg78, Arg103, and 130–138; that span reads DPMLATGGS. Residues Ile193 and 198 to 200 each bind uracil; that span reads GDA. A 5-phospho-alpha-D-ribose 1-diphosphate-binding site is contributed by Asp199.

It belongs to the UPRTase family. Mg(2+) serves as cofactor.

The enzyme catalyses UMP + diphosphate = 5-phospho-alpha-D-ribose 1-diphosphate + uracil. It participates in pyrimidine metabolism; UMP biosynthesis via salvage pathway; UMP from uracil: step 1/1. With respect to regulation, allosterically activated by GTP. Its function is as follows. Catalyzes the conversion of uracil and 5-phospho-alpha-D-ribose 1-diphosphate (PRPP) to UMP and diphosphate. The protein is Uracil phosphoribosyltransferase of Azotobacter vinelandii (strain DJ / ATCC BAA-1303).